An 861-amino-acid polypeptide reads, in one-letter code: Leucine--tRNA ligase (861 aa).

The 'HIGH' region signature appears at 42 to 52 (PYPSGKLHMGH). A 'KMSKS' region motif is present at residues 620-624 (KMSKS). Lys623 contributes to the ATP binding site.

It belongs to the class-I aminoacyl-tRNA synthetase family.

It is found in the cytoplasm. It carries out the reaction tRNA(Leu) + L-leucine + ATP = L-leucyl-tRNA(Leu) + AMP + diphosphate. The chain is Leucine--tRNA ligase from Buchnera aphidicola subsp. Schizaphis graminum (strain Sg).